The sequence spans 610 residues: Alpha-fetoprotein (610 aa).

Residues 1–18 (MKWVVSFFLLFLLNFSDS) form the signal peptide. 3 consecutive Albumin domains span residues 19 to 210 (RTMH…TSIT), 211 to 403 (KELR…EELE), and 404 to 602 (KYIQ…ALIS). H22 is a Cu(2+) binding site. 8 disulfide bridges follow: C99–C114, C113–C124, C148–C193, C192–C201, C224–C270, C269–C277, C289–C303, and C302–C314. Residues S111 and S115 each carry the phosphoserine modification. N197 and N251 each carry an N-linked (GlcNAc...) asparagine glycan. S345 carries the phosphoserine modification. 7 cysteine pairs are disulfide-bonded: C385–C394, C417–C463, C462–C473, C486–C502, C501–C512, C539–C584, and C583–C592. S445 carries the phosphoserine modification.

Belongs to the ALB/AFP/VDB family. Dimeric and trimeric forms have been found in addition to the monomeric form. In terms of processing, sulfated. As to expression, plasma.

The protein resides in the secreted. Its function is as follows. Binds copper, nickel, and fatty acids as well as, and bilirubin less well than, serum albumin. This Bos taurus (Bovine) protein is Alpha-fetoprotein (AFP).